The following is a 336-amino-acid chain: Phenylalanine--tRNA ligase alpha subunit (336 aa).

Glutamate 251 lines the Mg(2+) pocket.

The protein belongs to the class-II aminoacyl-tRNA synthetase family. Phe-tRNA synthetase alpha subunit type 1 subfamily. As to quaternary structure, tetramer of two alpha and two beta subunits. Requires Mg(2+) as cofactor.

Its subcellular location is the cytoplasm. The enzyme catalyses tRNA(Phe) + L-phenylalanine + ATP = L-phenylalanyl-tRNA(Phe) + AMP + diphosphate + H(+). The protein is Phenylalanine--tRNA ligase alpha subunit of Syntrophobacter fumaroxidans (strain DSM 10017 / MPOB).